Reading from the N-terminus, the 99-residue chain is NADH-quinone oxidoreductase subunit K (99 aa).

Transmembrane regions (helical) follow at residues 3-23, 28-48, and 62-82; these read PENY…GVLL, IVVF…FVTF, and FFTM…IMII.

It belongs to the complex I subunit 4L family. As to quaternary structure, NDH-1 is composed of 14 different subunits. Subunits NuoA, H, J, K, L, M, N constitute the membrane sector of the complex.

It localises to the cell membrane. The enzyme catalyses a quinone + NADH + 5 H(+)(in) = a quinol + NAD(+) + 4 H(+)(out). In terms of biological role, NDH-1 shuttles electrons from NADH, via FMN and iron-sulfur (Fe-S) centers, to quinones in the respiratory chain. The immediate electron acceptor for the enzyme in this species is believed to be a menaquinone. Couples the redox reaction to proton translocation (for every two electrons transferred, four hydrogen ions are translocated across the cytoplasmic membrane), and thus conserves the redox energy in a proton gradient. The sequence is that of NADH-quinone oxidoreductase subunit K from Rhodococcus erythropolis (strain PR4 / NBRC 100887).